Reading from the N-terminus, the 286-residue chain is Translocon-associated protein subunit alpha (286 aa).

A signal peptide spans 1-21 (MRLLPRLLLLLLLVFPATVLL). The Lumenal portion of the chain corresponds to 22–207 (RGGPGGSLAE…EREDGLDGQT (186 aa)). The interval 28-83 (SLAEAQDLSEDEETVEDSVIEDEDDEAEVEEDEPTDLAEDREEEDVSGEPEASPSA) is disordered. Over residues 34–75 (DLSEDEETVEDSVIEDEDDEAEVEEDEPTDLAEDREEEDVSG) the composition is skewed to acidic residues. 2 N-linked (GlcNAc...) asparagine glycosylation sites follow: asparagine 136 and asparagine 191. A helical transmembrane segment spans residues 208 to 228 (IFMYMSLAGLGLLVVVGLHQL). Topologically, residues 229 to 286 (LESRNRKRPIQKVEMGTSSQNDVDMSWIPQETLNQINKASPRRLPRKRPQKRSVGSDE) are cytoplasmic. The residue at position 247 (serine 247) is a Phosphoserine. Residue threonine 260 is modified to Phosphothreonine. A disordered region spans residues 264–286 (INKASPRRLPRKRPQKRSVGSDE). Serine 268 bears the Phosphoserine mark. The segment covering 268-279 (SPRRLPRKRPQK) has biased composition (basic residues).

This sequence belongs to the TRAP-alpha family. As to quaternary structure, heterotetramer of TRAP-alpha, TRAP-beta, TRAP-delta and TRAP-gamma. Interacts with palmitoylated calnexin (CALX), the interaction is required for efficient folding of glycosylated proteins. In terms of processing, phosphorylated in its cytoplasmic tail.

It localises to the endoplasmic reticulum membrane. Its function is as follows. TRAP proteins are part of a complex whose function is to bind calcium to the ER membrane and thereby regulate the retention of ER resident proteins. May be involved in the recycling of the translocation apparatus after completion of the translocation process or may function as a membrane-bound chaperone facilitating folding of translocated proteins. In Oryctolagus cuniculus (Rabbit), this protein is Translocon-associated protein subunit alpha (SSR1).